The chain runs to 314 residues: Nitrilase 2 (314 aa).

In terms of domain architecture, CN hydrolase spans 7–269; the sequence is VTLGVAQAAP…ETLITARVST (263 aa). The active-site Proton acceptor is Glu-47. The Proton donor role is filled by Lys-132. Catalysis depends on Cys-166, which acts as the Nucleophile.

This sequence belongs to the carbon-nitrogen hydrolase superfamily. Nitrilase family.

The catalysed reaction is a nitrile + 2 H2O = a carboxylate + NH4(+). Functionally, nitrilases catalyze the mild hydrolytic conversion of organonitriles directly to the corresponding carboxylic acids. Catalyzes the production of aryllactic acid derivatives. Mediates the hydrolysis of cyanohydrin to (S)-phenyllactic acid. In Unknown prokaryotic organism, this protein is Nitrilase 2.